A 64-amino-acid chain; its full sequence is Large ribosomal subunit protein bL35 (64 aa).

Composition is skewed to basic residues over residues 1–15 (MPKNKTHSGASKRFK) and 27–42 (AGKRHLLEHKSSKKTR). Positions 1 to 45 (MPKNKTHSGASKRFKITGSGKVLRERAGKRHLLEHKSSKKTRSLT) are disordered.

Belongs to the bacterial ribosomal protein bL35 family.

In Streptomyces griseus subsp. griseus (strain JCM 4626 / CBS 651.72 / NBRC 13350 / KCC S-0626 / ISP 5235), this protein is Large ribosomal subunit protein bL35.